Reading from the N-terminus, the 174-residue chain is Shikimate kinase (174 aa).

15 to 20 (GTGKST) is an ATP binding site. Position 19 (Ser-19) interacts with Mg(2+). Asp-37, Arg-61, and Gly-82 together coordinate substrate. Arg-120 is a binding site for ATP. Substrate is bound at residue Arg-138.

It belongs to the shikimate kinase family. Monomer. Mg(2+) serves as cofactor.

The protein resides in the cytoplasm. The catalysed reaction is shikimate + ATP = 3-phosphoshikimate + ADP + H(+). It functions in the pathway metabolic intermediate biosynthesis; chorismate biosynthesis; chorismate from D-erythrose 4-phosphate and phosphoenolpyruvate: step 5/7. Its function is as follows. Catalyzes the specific phosphorylation of the 3-hydroxyl group of shikimic acid using ATP as a cosubstrate. The sequence is that of Shikimate kinase from Staphylococcus aureus (strain NCTC 8325 / PS 47).